An 89-amino-acid polypeptide reads, in one-letter code: Small ribosomal subunit protein uS15 (89 aa).

The protein belongs to the universal ribosomal protein uS15 family. Part of the 30S ribosomal subunit. Forms a bridge to the 50S subunit in the 70S ribosome, contacting the 23S rRNA.

Functionally, one of the primary rRNA binding proteins, it binds directly to 16S rRNA where it helps nucleate assembly of the platform of the 30S subunit by binding and bridging several RNA helices of the 16S rRNA. Forms an intersubunit bridge (bridge B4) with the 23S rRNA of the 50S subunit in the ribosome. This Buchnera aphidicola subsp. Acyrthosiphon pisum (strain 5A) protein is Small ribosomal subunit protein uS15.